The chain runs to 454 residues: Aquaglyceroporin-9 (454 aa).

Residues 1–186 (MEGGLRSPLN…RHTMREPFSE (186 aa)) are Cytoplasmic-facing. A helical transmembrane segment spans residues 187–207 (FFGVFILILFGDGVVAQVVLS). The Extracellular segment spans residues 208–216 (SGERGSYQS). A helical transmembrane segment spans residues 217–237 (ISWGWGIGVMLGVYASGVSGA). Residues 238 to 257 (HINPAVTFANCIFRKFPWRK) are Cytoplasmic-facing. Residues 240 to 242 (NPA) carry the NPA 1 motif. A helical transmembrane segment spans residues 258–278 (FPIYMLAQVLGAMCASGVVYA). The Extracellular portion of the chain corresponds to 279–316 (NYKSAIDMFEGGNNIRTVGLNTSSAGIFCTYPAPFMTK). Residue N299 is glycosylated (N-linked (GlcNAc...) asparagine). The helical transmembrane segment at 317–337 (TGQFFSEFVASTILMFCIYAL) threads the bilayer. At 338–351 (QDNGNLGSGNLTPL) the chain is on the cytoplasmic side. Residues 352 to 372 (GLFFVIFGIGACFGWETGYAI) traverse the membrane as a helical segment. The NPA 2 motif lies at 373–375 (NLA). Over 373–403 (NLARDFGPRLMSYFLGYGHEVWSAGNYYFWV) the chain is Extracellular. A helical transmembrane segment spans residues 404 to 424 (PMVAPFIGCLFGGWLYDVFIF). The Cytoplasmic segment spans residues 425–454 (TGESPINTPWMGLKRLMPGGLGSKKVDSKV).

It belongs to the MIP/aquaporin (TC 1.A.8) family.

It localises to the membrane. The catalysed reaction is H2O(in) = H2O(out). It carries out the reaction glycerol(in) = glycerol(out). Functionally, water channel required to facilitate the transport of water across membranes. May play a role in the vegetative growth and pathogenicity. The sequence is that of Aquaglyceroporin-9 from Botryotinia fuckeliana (strain B05.10) (Noble rot fungus).